The primary structure comprises 252 residues: MSLLTEVETYVLSIVPSGPLKAEIAQRLEDVFAGKNTDLEALMEWLKTRPILSPLTKGILGFVFTLTVPSERGLQRRRFVQNALNGNGDPNNMDRAVKLYRKLKREITFHGAKEIALSYSAGALASCMGLIYNRMGAVTTEVAFGLVCATCEQIADSQHRSHRQMVTTTNPLIRHENRMVLASTTAKAMEQMAGSSEQAAEAMEVASQARQMVQAMRAIGTHPSSSAGLKNDLLENLQAYQKRMGVQMQRFK.

The segment at 1 to 164 (MSLLTEVETY…ADSQHRSHRQ (164 aa)) is membrane-binding. The Nuclear localization signal signature appears at 101 to 105 (RKLKR). The RNP-binding stretch occupies residues 165-252 (MVTTTNPLIR…RMGVQMQRFK (88 aa)).

The protein belongs to the influenza viruses Matrix protein M1 family. Homodimer and homomultimer. Interacts with NEP. Binds ribonucleocapsid by both interacting with genomic RNA and NP protein. May interact with HA and NA. Cannot bind NP without genomic RNA.

The protein localises to the virion membrane. It localises to the host nucleus. Its function is as follows. Plays critical roles in virus replication, from virus entry and uncoating to assembly and budding of the virus particle. M1 binding to ribonucleocapsids (RNPs) in nucleus seems to inhibit viral transcription. Interaction of viral NEP with M1-RNP is thought to promote nuclear export of the complex, which is targeted to the virion assembly site at the apical plasma membrane in polarized epithelial cells. Interactions with NA and HA may bring M1, a non-raft-associated protein, into lipid rafts. Forms a continuous shell on the inner side of the lipid bilayer in virion, where it binds the RNP. During virus entry into cell, the M2 ion channel acidifies the internal virion core, inducing M1 dissociation from the RNP. M1-free RNPs are transported to the nucleus, where viral transcription and replication can take place. Determines the virion's shape: spherical or filamentous. Clinical isolates of influenza are characterized by the presence of significant proportion of filamentous virions, whereas after multiple passage on eggs or cell culture, virions have only spherical morphology. Filamentous virions are thought to be important to infect neighboring cells, and spherical virions more suited to spread through aerosol between hosts organisms. This Influenza A virus (strain A/Hickox/1940 H1N1) protein is Matrix protein 1.